The primary structure comprises 196 residues: Bcl-2-like protein 11 (196 aa).

Positions 1-68 (MAKQPSDVNS…PLAPPASPGP (68 aa)) are disordered. The segment covering 34-43 (TSLQTESQGN) has biased composition (polar residues). Residue Ser-65 is modified to Phosphoserine; by MAPK. Ser-73, Ser-83, and Ser-90 each carry phosphoserine. The segment at 90–114 (SGYFSFDTDRSPAPMSCDKSTQTPS) is disordered. The short motif at 146–160 (IAQELRRIGDEFNET) is the BH3 element.

Belongs to the Bcl-2 family. Forms heterodimers with a number of antiapoptotic Bcl-2 proteins, including MCL1, BCL2, BCL2L1 isoform Bcl-X(L), BCL2A1/BFL-1, and BCL2L2/BCLW. Does not heterodimerize with proapoptotic proteins such as BAD, BOK or BAK. Identified in a complex containing BCL2L11, DYNLL1 and BCL2L1 isoform Bcl-X(L); BH3 integrity is required for BCL2L1-binding. Interacts with YWHAZ. When phosphorylated, interacts with TRIM2; this interaction is associated with ubiquitination and degradation. Interacts (via BH3) with MCL1; this interaction may sequester BCL2L11 and prevent its pro-apoptotic activity. When phosphorylated, isoform BimEL interacts with USP27X; this interaction leads to BCL2L11 deubiquitination and stabilization. Interacts with GIMAP5. Interacts with BCL2L10/BCL-B. In terms of processing, phosphorylation at Ser-65 by MAPK1/MAPK3 leads interaction with TRIM2 and ubiquitination, followed by proteasomal degradation. Deubiquitination catalyzed by USP27X stabilizes the protein. Post-translationally, ubiquitination by TRIM2 following phosphorylation by MAPK1/MAPK3 leads to proteasomal degradation. Conversely, deubiquitination catalyzed by USP27X stabilizes the protein. In terms of tissue distribution, widely expressed.

It localises to the membrane. Its subcellular location is the mitochondrion. Functionally, induces apoptosis and anoikis. This is Bcl-2-like protein 11 (Bcl2l11) from Rattus norvegicus (Rat).